A 464-amino-acid polypeptide reads, in one-letter code: tRNA modification GTPase MnmE (464 aa).

Positions 27, 90, and 129 each coordinate (6S)-5-formyl-5,6,7,8-tetrahydrofolate. Residues 222 to 384 (GVALVLAGSV…LYDKIRALIS (163 aa)) form the TrmE-type G domain. GTP is bound by residues 232-237 (NAGKSS), 251-257 (SSYPGTT), and 276-279 (DTAG). Ser236 and Thr257 together coordinate Mg(2+). (6S)-5-formyl-5,6,7,8-tetrahydrofolate is bound at residue Lys464.

Belongs to the TRAFAC class TrmE-Era-EngA-EngB-Septin-like GTPase superfamily. TrmE GTPase family. In terms of assembly, homodimer. Heterotetramer of two MnmE and two MnmG subunits. K(+) is required as a cofactor.

Its subcellular location is the cytoplasm. Exhibits a very high intrinsic GTPase hydrolysis rate. Involved in the addition of a carboxymethylaminomethyl (cmnm) group at the wobble position (U34) of certain tRNAs, forming tRNA-cmnm(5)s(2)U34. This is tRNA modification GTPase MnmE from Borreliella burgdorferi (strain ATCC 35210 / DSM 4680 / CIP 102532 / B31) (Borrelia burgdorferi).